The primary structure comprises 272 residues: Insulin-like growth factor-binding protein 1 (272 aa).

Positions 1–25 (MPEFLTVVSWPFLILLSFQIGVAAG) are cleaved as a signal peptide. The IGFBP N-terminal domain occupies 28–109 (QPWHCAPCTA…TRGQGACVPE (82 aa)). 6 cysteine pairs are disulfide-bonded: C32/C59, C35/C61, C43/C62, C50/C65, C73/C86, and C80/C106. Phosphoserine occurs at positions 139, 157, and 169. T170 carries the post-translational modification Phosphothreonine. Y171 carries the phosphotyrosine modification. The Thyroglobulin type-1 domain occupies 186-264 (KEPCQRELYK…SLETRGDPNC (79 aa)). 3 cysteine pairs are disulfide-bonded: C189-C219, C230-C241, and C243-C264. S255 carries the post-translational modification Phosphoserine. The Cell attachment site signature appears at 259–261 (RGD).

Binds equally well IGF1 and IGF2. Interacts with integrin ITGA5:ITGB1. Interacts with VHL; this interaction inhibits HIF1A degradation.

The protein localises to the secreted. Functionally, multifunctional protein that plays a critical role in regulating the availability of IGFs such as IGF1 and IGF2 to their receptors and thereby regulates IGF-mediated cellular processes including cell migration, proliferation, differentiation or apoptosis in a cell-type specific manner. Also plays a positive role in cell migration by interacting with integrin ITGA5:ITGB1 through its RGD motif. Mechanistically, binding to integrins leads to activation of focal adhesion kinase/PTK2 and stimulation of the mitogen-activated protein kinase (MAPK) pathway. Regulates cardiomyocyte apoptosis by suppressing HIF-1alpha/HIF1A ubiquitination and subsequent degradation. The chain is Insulin-like growth factor-binding protein 1 (Igfbp1) from Mus musculus (Mouse).